Reading from the N-terminus, the 714-residue chain is MFNTHSVELDWGGRPLKLETGKVARQADGAVIATYGETVVMATVVSAKTPKEGIDFLPLTVNYQEKTYAAGRIPGGYFKREGRPSEKETLVSRLIDRPIRPLFADGYRCDTQVIVTTLSHDMENDPDIVAMVAASAALTLSGVPFMGPVGAARVAFVNNEFILNPTLDEMVDTQLDLVVAGTATAVLMVESEAKELPEEIMLGAVMFGHKHFQPVLKAIIELAEQAAKEPRDVVATVNADLEKEILGIVEQDLRKAYSIPVKQDRYAAVGAAKDKVLEHFFPEGIEPRYEKLRVLDVFKDLEAKIVRWNILDTGRRIDGRDLKTVRPIVAEVGVLPRAHGSALFTRGETQALVVTTLGTGEDEQYIDSLAGTYKETFLLHYNFPPFSVGETGRIGSPGRREIGHGKLAWRAIHPVLPAHHEFPYTLRVVSEITESNGSSSMATVCGSSLALMDAGVPLKRPTAGIAMGLILEGDRFAVLSDILGDEDHLGDMDFKVAGTEKGVTSLQMDIKIAGITEEIMKVALTQAKDGRMHILGEMAKALTAARAELGEHAPRIEVLQIPTDKIRDVIGTGGKVIREIVEKTGAKINIEDDGTVKVASANGESIRAAIKWIKSITSEPEVGQIYDGTVVKVMEFGAFVNFFGPKDGLVHISQLAASRVQKTSDVVKEGDKVKVKLLGLDDRGKVRLSMKAVDQTTGEDLEAKQKAENAPAAE.

Mg(2+) is bound by residues Asp-487 and Asp-493. Residues 554-613 (PRIEVLQIPTDKIRDVIGTGGKVIREIVEKTGAKINIEDDGTVKVASANGESIRAAIKWI) enclose the KH domain. In terms of domain architecture, S1 motif spans 623-691 (GQIYDGTVVK…DRGKVRLSMK (69 aa)).

It belongs to the polyribonucleotide nucleotidyltransferase family. Mg(2+) serves as cofactor.

The protein resides in the cytoplasm. The catalysed reaction is RNA(n+1) + phosphate = RNA(n) + a ribonucleoside 5'-diphosphate. Its function is as follows. Involved in mRNA degradation. Catalyzes the phosphorolysis of single-stranded polyribonucleotides processively in the 3'- to 5'-direction. The chain is Polyribonucleotide nucleotidyltransferase from Afipia carboxidovorans (strain ATCC 49405 / DSM 1227 / KCTC 32145 / OM5) (Oligotropha carboxidovorans).